Consider the following 394-residue polypeptide: 3-dehydroquinate synthase (394 aa).

NAD(+) is bound by residues 112-116, 136-137, lysine 149, lysine 158, and 176-179; these read GVIGD, TT, and TLAT. Zn(2+) contacts are provided by glutamate 191, histidine 254, and histidine 276. Residues 371-388 are compositionally biased toward polar residues; the sequence is STNQHTTYSPHQHATTKP. The tract at residues 371 to 394 is disordered; that stretch reads STNQHTTYSPHQHATTKPPNRRPH.

This sequence belongs to the sugar phosphate cyclases superfamily. Dehydroquinate synthase family. The cofactor is NAD(+). Co(2+) serves as cofactor. Zn(2+) is required as a cofactor.

Its subcellular location is the cytoplasm. It carries out the reaction 7-phospho-2-dehydro-3-deoxy-D-arabino-heptonate = 3-dehydroquinate + phosphate. It functions in the pathway metabolic intermediate biosynthesis; chorismate biosynthesis; chorismate from D-erythrose 4-phosphate and phosphoenolpyruvate: step 2/7. Catalyzes the conversion of 3-deoxy-D-arabino-heptulosonate 7-phosphate (DAHP) to dehydroquinate (DHQ). The chain is 3-dehydroquinate synthase from Xylella fastidiosa (strain 9a5c).